A 160-amino-acid polypeptide reads, in one-letter code: MSTLKKPDLSDPKLRAKLAKGMGHNYYGEPAWPNDLLYIFPVVILGTIACVVGLAVLDPAMLGDKANPFATPLEILPEWYLYPVFQILRVVPNKLLGIALQTLIPLGLMILPFIENVNKFSNPFRRPVAMVVFLFGTFLTIYLGIGACLPIDKSLTLGLF.

3 helical membrane passes run 36 to 56, 95 to 115, and 131 to 151; these read LLYI…GLAV, LLGI…PFIE, and VVFL…CLPI.

Belongs to the cytochrome b family. PetD subfamily. As to quaternary structure, the 4 large subunits of the cytochrome b6-f complex are cytochrome b6, subunit IV (17 kDa polypeptide, PetD), cytochrome f and the Rieske protein, while the 4 small subunits are PetG, PetL, PetM and PetN. The complex functions as a dimer.

The protein resides in the cellular thylakoid membrane. Its function is as follows. Component of the cytochrome b6-f complex, which mediates electron transfer between photosystem II (PSII) and photosystem I (PSI), cyclic electron flow around PSI, and state transitions. The protein is Cytochrome b6-f complex subunit 4 of Prochlorococcus marinus (strain MIT 9515).